The chain runs to 290 residues: Acetyl-coenzyme A carboxylase carboxyl transferase subunit beta (290 aa).

The region spanning 27–290 is the CoA carboxyltransferase N-terminal domain; the sequence is LWVKCPSCEA…LQRQPADALA (264 aa). Zn(2+)-binding residues include Cys31, Cys34, Cys50, and Cys53. The segment at 31-53 adopts a C4-type zinc-finger fold; that stretch reads CPSCEAVLYRNDVDANLHVCPKC.

This sequence belongs to the AccD/PCCB family. In terms of assembly, acetyl-CoA carboxylase is a heterohexamer composed of biotin carboxyl carrier protein (AccB), biotin carboxylase (AccC) and two subunits each of ACCase subunit alpha (AccA) and ACCase subunit beta (AccD). It depends on Zn(2+) as a cofactor.

The protein resides in the cytoplasm. It catalyses the reaction N(6)-carboxybiotinyl-L-lysyl-[protein] + acetyl-CoA = N(6)-biotinyl-L-lysyl-[protein] + malonyl-CoA. The protein operates within lipid metabolism; malonyl-CoA biosynthesis; malonyl-CoA from acetyl-CoA: step 1/1. Functionally, component of the acetyl coenzyme A carboxylase (ACC) complex. Biotin carboxylase (BC) catalyzes the carboxylation of biotin on its carrier protein (BCCP) and then the CO(2) group is transferred by the transcarboxylase to acetyl-CoA to form malonyl-CoA. This chain is Acetyl-coenzyme A carboxylase carboxyl transferase subunit beta, found in Burkholderia multivorans (strain ATCC 17616 / 249).